Here is a 533-residue protein sequence, read N- to C-terminus: GMP synthase [glutamine-hydrolyzing] (533 aa).

Positions 12 to 206 (TILVLDFGSQ…AVGICGAEQK (195 aa)) constitute a Glutamine amidotransferase type-1 domain. Residue C88 is the Nucleophile of the active site. Residues H180 and E182 contribute to the active site. Positions 207-408 (WTMAEFIGQE…LGISPELVGR (202 aa)) constitute a GMPS ATP-PPase domain. 235–241 (SGGVDST) is an ATP binding site. 4 residues coordinate XMP: R308, D470, K525, and E531.

As to quaternary structure, homodimer. The cofactor is Mg(2+).

It localises to the cytoplasm. It is found in the cytosol. The enzyme catalyses XMP + L-glutamine + ATP + H2O = GMP + L-glutamate + AMP + diphosphate + 2 H(+). The protein operates within purine metabolism; GMP biosynthesis; GMP from XMP (L-Gln route): step 1/1. Its function is as follows. Catalyzes the conversion of xanthine monophosphate (XMP) to GMP in the presence of glutamine and ATP through an adenyl-XMP intermediate. The protein is GMP synthase [glutamine-hydrolyzing] (gua1) of Emericella nidulans (strain FGSC A4 / ATCC 38163 / CBS 112.46 / NRRL 194 / M139) (Aspergillus nidulans).